The chain runs to 637 residues: Chaperone protein HtpG (637 aa).

The a; substrate-binding stretch occupies residues 1-345 (MSQQETHGFQ…SNDLPLNVSR (345 aa)). The b stretch occupies residues 346–562 (EILQDNQVTT…EGEMSTQMIK (217 aa)). The c stretch occupies residues 563 to 637 (LMQAAGQAVP…MNQMLLANAK (75 aa)).

Belongs to the heat shock protein 90 family. As to quaternary structure, homodimer.

It localises to the cytoplasm. Functionally, molecular chaperone. Has ATPase activity. In Shewanella denitrificans (strain OS217 / ATCC BAA-1090 / DSM 15013), this protein is Chaperone protein HtpG.